The following is a 321-amino-acid chain: Olfactory receptor 5P60 (321 aa).

Residues 1–28 lie on the Extracellular side of the membrane; that stretch reads MAFLHNGNHTAVTEFILLGLTDDPVLRI. N-linked (GlcNAc...) asparagine glycosylation occurs at Asn-8. The helical transmembrane segment at 29 to 49 threads the bilayer; that stretch reads VLFTIILCIYLVTVSGNLSTI. At 50–57 the chain is on the cytoplasmic side; that stretch reads LLIRVSSQ. A helical transmembrane segment spans residues 58–78; the sequence is LHHPMYFFLSHLASADIGYSS. Residues 79–102 are Extracellular-facing; that stretch reads SVTPNMLVNFLVKQNTISYIGCSI. A disulfide bridge connects residues Cys-100 and Cys-192. Residues 103–123 form a helical membrane-spanning segment; it reads QFGSAAFFGGLECFLLAVMAY. Residues 124 to 136 are Cytoplasmic-facing; it reads DRFVAICNPLLYS. Residues 137 to 157 traverse the membrane as a helical segment; the sequence is TKMSTQVCVQLVVGSYIGGFL. Residues 158–199 lie on the Extracellular side of the membrane; that stretch reads NASFATVSFLFLFFCGPNIINHFFCDFAPLIELSCSDVRISV. The chain crosses the membrane as a helical span at residues 200–220; that stretch reads LVTSFSAGTVTMLTVLVIAIS. Residues 221-240 lie on the Cytoplasmic side of the membrane; the sequence is YTYILITILKMRSTEGRHKA. Residues 241–261 traverse the membrane as a helical segment; the sequence is FSTCTSHLTAVSLFYGTITFI. Topologically, residues 262-274 are extracellular; that stretch reads YVMPKSRYSTDQN. Residues 275–295 form a helical membrane-spanning segment; it reads KVVSVFYMVVIPMLNPLIYSL. The Cytoplasmic portion of the chain corresponds to 296 to 321; the sequence is RNNEIKGALRRHLGKKIFSQSNILFY.

Belongs to the G-protein coupled receptor 1 family.

It is found in the cell membrane. In terms of biological role, potential odorant receptor. In Mus musculus (Mouse), this protein is Olfactory receptor 5P60.